Reading from the N-terminus, the 128-residue chain is Large ribosomal subunit protein mL51 (128 aa).

Residues 1 to 31 (MAGSVPWAASRRLWGWVPSACRSFSLGVPRL) constitute a mitochondrion transit peptide.

It belongs to the mitochondrion-specific ribosomal protein mL51 family. In terms of assembly, component of the mitochondrial ribosome large subunit (39S) which comprises a 16S rRNA and about 50 distinct proteins. Interacts with OXA1L.

It is found in the mitochondrion. This chain is Large ribosomal subunit protein mL51 (Mrpl51), found in Mus musculus (Mouse).